The sequence spans 156 residues: Small ribosomal subunit protein uS7 (156 aa).

The protein belongs to the universal ribosomal protein uS7 family. In terms of assembly, part of the 30S ribosomal subunit. Contacts proteins S9 and S11.

Its function is as follows. One of the primary rRNA binding proteins, it binds directly to 16S rRNA where it nucleates assembly of the head domain of the 30S subunit. Is located at the subunit interface close to the decoding center, probably blocks exit of the E-site tRNA. In Geobacter sp. (strain M21), this protein is Small ribosomal subunit protein uS7.